A 332-amino-acid polypeptide reads, in one-letter code: T-cell surface glycoprotein CD1c1 (332 aa).

Residues 1-17 (MLFLHFLFLDVVLGGSI) form the signal peptide. Residues 18-300 (TENVVQENIS…IILYWGHGLS (283 aa)) are Extracellular-facing. N-linked (GlcNAc...) asparagine glycans are attached at residues Asn25, Asn38, Asn75, and Asn146. 2 disulfides stabilise this stretch: Cys120–Cys184 and Cys224–Cys279. The region spanning 205–292 (PEVWLSSSPN…HSSLRDQDII (88 aa)) is the Ig-like domain. Residues 301 to 321 (VILITFAVIVPLVLLIVLMLL) form a helical membrane-spanning segment. The Cytoplasmic portion of the chain corresponds to 322-332 (YKKRCTYQGIQ).

As to quaternary structure, heterodimer with B2M (beta-2-microglobulin).

Its subcellular location is the cell membrane. The protein resides in the endosome membrane. Functionally, antigen-presenting protein that binds self and non-self lipid and glycolipid antigens and presents them to T-cell receptors on natural killer T-cells. This is T-cell surface glycoprotein CD1c1 (CD1C1) from Cavia porcellus (Guinea pig).